We begin with the raw amino-acid sequence, 466 residues long: 3-isopropylmalate dehydratase large subunit (466 aa).

The [4Fe-4S] cluster site is built by Cys-347, Cys-407, and Cys-410.

It belongs to the aconitase/IPM isomerase family. LeuC type 1 subfamily. As to quaternary structure, heterodimer of LeuC and LeuD. It depends on [4Fe-4S] cluster as a cofactor.

The enzyme catalyses (2R,3S)-3-isopropylmalate = (2S)-2-isopropylmalate. It participates in amino-acid biosynthesis; L-leucine biosynthesis; L-leucine from 3-methyl-2-oxobutanoate: step 2/4. Its function is as follows. Catalyzes the isomerization between 2-isopropylmalate and 3-isopropylmalate, via the formation of 2-isopropylmaleate. This chain is 3-isopropylmalate dehydratase large subunit, found in Pectobacterium carotovorum subsp. carotovorum (strain PC1).